We begin with the raw amino-acid sequence, 131 residues long: MAARGGKKEPPDAVHLNRLLYERVRKELRCQRLHTEHSINPLRPVHAVTQKPMSWHDNIEEPADARFLNIIHQAALEPTKKYSEPQTESQEIGWNTTPLTDVDRTDRRLFFPRRRTEITMHSAAGGHPKKQ.

The disordered stretch occupies residues 79 to 99; that stretch reads TKKYSEPQTESQEIGWNTTPL. Over residues 84-99 the composition is skewed to polar residues; that stretch reads EPQTESQEIGWNTTPL.

It belongs to the CFAP144 family. As to expression, expressed in choroid plexus (at protein level). Expressed by motile ciliated cells in choroid plexus.

The protein resides in the cytoplasm. Its subcellular location is the cytoskeleton. It localises to the cilium axoneme. The protein localises to the flagellum axoneme. In terms of biological role, microtubule inner protein (MIP) part of the dynein-decorated doublet microtubules (DMTs) in cilia axoneme, which is required for motile cilia beating. In Gallus gallus (Chicken), this protein is Cilia- and flagella-associated protein 144 (CFAP144).